Here is a 298-residue protein sequence, read N- to C-terminus: GTPase Era (298 aa).

The Era-type G domain maps to 3–170 (KSGFVAILGR…VQLLKDNLEE (168 aa)). Residues 11-18 (GRPNVGKS) form a G1 region. Position 11–18 (11–18 (GRPNVGKS)) interacts with GTP. The tract at residues 37–41 (QTTRN) is G2. The tract at residues 58–61 (DTPG) is G3. GTP-binding positions include 58–62 (DTPGI) and 120–123 (NKID). The tract at residues 120-123 (NKID) is G4. The G5 stretch occupies residues 149-151 (ISA). The KH type-2 domain occupies 201–279 (TQQEVPHSVA…YLETWVKVKK (79 aa)).

The protein belongs to the TRAFAC class TrmE-Era-EngA-EngB-Septin-like GTPase superfamily. Era GTPase family. As to quaternary structure, monomer.

It is found in the cytoplasm. The protein resides in the cell membrane. An essential GTPase that binds both GDP and GTP, with rapid nucleotide exchange. Plays a role in 16S rRNA processing and 30S ribosomal subunit biogenesis and possibly also in cell cycle regulation and energy metabolism. This is GTPase Era from Streptococcus equi subsp. zooepidemicus (strain MGCS10565).